Reading from the N-terminus, the 99-residue chain is NAD(P)H-quinone oxidoreductase subunit 4L, chloroplastic (99 aa).

3 helical membrane passes run 1–21 (MFEQ…FGLI), 31–51 (MSLE…SNLF), and 59–79 (IFTL…LAIA).

It belongs to the complex I subunit 4L family. In terms of assembly, NDH is composed of at least 16 different subunits, 5 of which are encoded in the nucleus.

The protein resides in the plastid. The protein localises to the chloroplast thylakoid membrane. It carries out the reaction a plastoquinone + NADH + (n+1) H(+)(in) = a plastoquinol + NAD(+) + n H(+)(out). The enzyme catalyses a plastoquinone + NADPH + (n+1) H(+)(in) = a plastoquinol + NADP(+) + n H(+)(out). In terms of biological role, NDH shuttles electrons from NAD(P)H:plastoquinone, via FMN and iron-sulfur (Fe-S) centers, to quinones in the photosynthetic chain and possibly in a chloroplast respiratory chain. The immediate electron acceptor for the enzyme in this species is believed to be plastoquinone. Couples the redox reaction to proton translocation, and thus conserves the redox energy in a proton gradient. The protein is NAD(P)H-quinone oxidoreductase subunit 4L, chloroplastic of Adiantum capillus-veneris (Maidenhair fern).